An 81-amino-acid polypeptide reads, in one-letter code: Large ribosomal subunit protein bL27 (81 aa).

Over residues Met1–Lys11 the composition is skewed to polar residues. Residues Met1–Arg20 form a disordered region.

Belongs to the bacterial ribosomal protein bL27 family.

The polypeptide is Large ribosomal subunit protein bL27 (Borreliella afzelii (strain PKo) (Borrelia afzelii)).